We begin with the raw amino-acid sequence, 184 residues long: Inosine triphosphate pyrophosphatase (184 aa).

10-15 is a binding site for ITP; that stretch reads TGNVKK. A Mg(2+)-binding site is contributed by Glu37. ITP is bound by residues Lys49, 65–66, Lys82, 141–144, Lys164, and 169–170; these read DT, FGWD, and HR.

It belongs to the HAM1 NTPase family. Homodimer. Mg(2+) serves as cofactor. Mn(2+) is required as a cofactor.

The protein resides in the cytoplasm. It carries out the reaction ITP + H2O = IMP + diphosphate + H(+). It catalyses the reaction dITP + H2O = dIMP + diphosphate + H(+). The enzyme catalyses XTP + H2O = XMP + diphosphate + H(+). Functionally, pyrophosphatase that hydrolyzes non-canonical purine nucleotides such as inosine triphosphate (ITP), deoxyinosine triphosphate (dITP) or xanthosine 5'-triphosphate (XTP) to their respective monophosphate derivatives. The enzyme does not distinguish between the deoxy- and ribose forms. Probably excludes non-canonical purines from RNA and DNA precursor pools, thus preventing their incorporation into RNA and DNA and avoiding chromosomal lesions. The chain is Inosine triphosphate pyrophosphatase from Caenorhabditis elegans.